The chain runs to 217 residues: Redox-sensing transcriptional repressor Rex (217 aa).

The H-T-H motif DNA-binding region spans 18–57 (LYYRFLKNLHASGKQRVSSAELSDAVKVDSATIRRDFSYF). 92 to 97 (GVGNLG) is an NAD(+) binding site.

The protein belongs to the transcriptional regulatory Rex family. As to quaternary structure, homodimer.

The protein resides in the cytoplasm. Functionally, modulates transcription in response to changes in cellular NADH/NAD(+) redox state. The polypeptide is Redox-sensing transcriptional repressor Rex (Bacillus pumilus (strain SAFR-032)).